A 360-amino-acid chain; its full sequence is Glutamate 5-kinase (360 aa).

Lys-7 provides a ligand contact to ATP. Ser-47, Asp-134, and Asn-146 together coordinate substrate. ATP is bound by residues 166–167 and 210–216; these read TD and TGGITTK. The PUA domain occupies 275-348; it reads VGQITLDEGA…LNKKENINSS (74 aa).

Belongs to the glutamate 5-kinase family.

It is found in the cytoplasm. The catalysed reaction is L-glutamate + ATP = L-glutamyl 5-phosphate + ADP. The protein operates within amino-acid biosynthesis; L-proline biosynthesis; L-glutamate 5-semialdehyde from L-glutamate: step 1/2. Its function is as follows. Catalyzes the transfer of a phosphate group to glutamate to form L-glutamate 5-phosphate. The chain is Glutamate 5-kinase from Prochlorococcus marinus subsp. pastoris (strain CCMP1986 / NIES-2087 / MED4).